Reading from the N-terminus, the 379-residue chain is tRNA-specific 2-thiouridylase MnmA (379 aa).

ATP-binding positions include 6–13 and Leu32; that span reads AMSGGVDS. Cys101 functions as the Nucleophile in the catalytic mechanism. Cys101 and Cys199 form a disulfide bridge. Position 125 (Gly125) interacts with ATP. The segment at 148–150 is interaction with tRNA; sequence KDQ. Cys199 acts as the Cysteine persulfide intermediate in catalysis.

This sequence belongs to the MnmA/TRMU family.

The protein localises to the cytoplasm. The catalysed reaction is S-sulfanyl-L-cysteinyl-[protein] + uridine(34) in tRNA + AH2 + ATP = 2-thiouridine(34) in tRNA + L-cysteinyl-[protein] + A + AMP + diphosphate + H(+). In terms of biological role, catalyzes the 2-thiolation of uridine at the wobble position (U34) of tRNA, leading to the formation of s(2)U34. This Arthrobacter sp. (strain FB24) protein is tRNA-specific 2-thiouridylase MnmA.